The following is a 303-amino-acid chain: Peptidyl-prolyl isomerase CWC27 (303 aa).

Residues 7–153 (ASGKCVLYTT…AEVTIPYFDG (147 aa)) enclose the PPIase cyclophilin-type domain. Disordered stretches follow at residues 155 to 195 (SGQK…PPLD) and 208 to 274 (ERLT…TDLA).

This sequence belongs to the cyclophilin-type PPIase family. CWC27 subfamily. Associated with the spliceosome.

Its subcellular location is the cytoplasm. It is found in the nucleus. The catalysed reaction is [protein]-peptidylproline (omega=180) = [protein]-peptidylproline (omega=0). In terms of biological role, PPIases accelerate the folding of proteins. It catalyzes the cis-trans isomerization of proline imidic peptide bonds in oligopeptides. Involved in pre-mRNA splicing. This is Peptidyl-prolyl isomerase CWC27 (CWC27) from Eremothecium gossypii (strain ATCC 10895 / CBS 109.51 / FGSC 9923 / NRRL Y-1056) (Yeast).